The primary structure comprises 386 residues: MGRVGVLLLNLGGPDKLEDVRPFLFNLFADPEIIRLPAPWMQKPLAWLISTLRAGKSQENYKEIGGGSPLRQITEAQGTALAQKLAEWGQEVKVYVGMRYWHPFTEEAIAEIKKDDLDQLVVLPLYPQFSISTSGSSFRVLEEMWRTDKDLNQLDYTLIPSWYDHPQYIAAMVDLIRQELDQFDNPDQAHIFFSAHGVPQSYVEEAGDPYQREIEECTKLIMEALGRPNDYTLAYQSRVGPVEWLQPYTEDSLIALGEKGVKDLVVIPISFVSEHIETLQEIDIEYREVAEEAGIENFRRVPALNTHPLFIESLANLVTDSLEQCPRTFGQVTHPKENMKMYPQELSWGMNTSAEVLNGRLAMIGFLALLLELISGQGPLHFVGIM.

Fe cation contacts are provided by His196 and Glu277.

It belongs to the ferrochelatase family.

It is found in the cytoplasm. The enzyme catalyses heme b + 2 H(+) = protoporphyrin IX + Fe(2+). It functions in the pathway porphyrin-containing compound metabolism; protoheme biosynthesis; protoheme from protoporphyrin-IX: step 1/1. Functionally, catalyzes the ferrous insertion into protoporphyrin IX. This Picosynechococcus sp. (strain ATCC 27264 / PCC 7002 / PR-6) (Agmenellum quadruplicatum) protein is Ferrochelatase.